The chain runs to 410 residues: Bifunctional enzyme IspD/IspF (410 aa).

The tract at residues 1 to 257 is 2-C-methyl-D-erythritol 4-phosphate cytidylyltransferase; it reads MSHDPVVPSA…AGAGSASSRL (257 aa). A 2-C-methyl-D-erythritol 2,4-cyclodiphosphate synthase region spans residues 258-410; the sequence is RSGIGTDVHA…AVATALVERL (153 aa). A divalent metal cation is bound by residues Asp-264 and His-266. 4-CDP-2-C-methyl-D-erythritol 2-phosphate contacts are provided by residues 264–266 and 290–291; these read DVH and HS. His-298 lines the a divalent metal cation pocket. Residues 312-314, 385-388, Phe-392, and Arg-395 each bind 4-CDP-2-C-methyl-D-erythritol 2-phosphate; these read DIG and TTTD.

It in the N-terminal section; belongs to the IspD/TarI cytidylyltransferase family. IspD subfamily. In the C-terminal section; belongs to the IspF family. Requires a divalent metal cation as cofactor.

It catalyses the reaction 2-C-methyl-D-erythritol 4-phosphate + CTP + H(+) = 4-CDP-2-C-methyl-D-erythritol + diphosphate. The catalysed reaction is 4-CDP-2-C-methyl-D-erythritol 2-phosphate = 2-C-methyl-D-erythritol 2,4-cyclic diphosphate + CMP. Its pathway is isoprenoid biosynthesis; isopentenyl diphosphate biosynthesis via DXP pathway; isopentenyl diphosphate from 1-deoxy-D-xylulose 5-phosphate: step 2/6. It participates in isoprenoid biosynthesis; isopentenyl diphosphate biosynthesis via DXP pathway; isopentenyl diphosphate from 1-deoxy-D-xylulose 5-phosphate: step 4/6. In terms of biological role, bifunctional enzyme that catalyzes the formation of 4-diphosphocytidyl-2-C-methyl-D-erythritol from CTP and 2-C-methyl-D-erythritol 4-phosphate (MEP) (IspD), and catalyzes the conversion of 4-diphosphocytidyl-2-C-methyl-D-erythritol 2-phosphate (CDP-ME2P) to 2-C-methyl-D-erythritol 2,4-cyclodiphosphate (ME-CPP) with a corresponding release of cytidine 5-monophosphate (CMP) (IspF). The protein is Bifunctional enzyme IspD/IspF of Clavibacter michiganensis subsp. michiganensis (strain NCPPB 382).